The sequence spans 209 residues: Pyridoxine/pyridoxamine 5'-phosphate oxidase (209 aa).

Substrate-binding positions include 7–10 (REDY) and Lys-64. FMN is bound by residues 59–64 (RIVLLK), 74–75 (FT), Arg-80, and Lys-81. Residues Tyr-121, Arg-125, and Ser-129 each coordinate substrate. FMN-binding positions include 138-139 (QS) and Trp-182. 188–190 (RLH) lines the substrate pocket. FMN is bound at residue Arg-192.

It belongs to the pyridoxamine 5'-phosphate oxidase family. In terms of assembly, homodimer. The cofactor is FMN.

It carries out the reaction pyridoxamine 5'-phosphate + O2 + H2O = pyridoxal 5'-phosphate + H2O2 + NH4(+). The enzyme catalyses pyridoxine 5'-phosphate + O2 = pyridoxal 5'-phosphate + H2O2. It functions in the pathway cofactor metabolism; pyridoxal 5'-phosphate salvage; pyridoxal 5'-phosphate from pyridoxamine 5'-phosphate: step 1/1. It participates in cofactor metabolism; pyridoxal 5'-phosphate salvage; pyridoxal 5'-phosphate from pyridoxine 5'-phosphate: step 1/1. Functionally, catalyzes the oxidation of either pyridoxine 5'-phosphate (PNP) or pyridoxamine 5'-phosphate (PMP) into pyridoxal 5'-phosphate (PLP). This chain is Pyridoxine/pyridoxamine 5'-phosphate oxidase, found in Actinobacillus pleuropneumoniae serotype 7 (strain AP76).